A 357-amino-acid chain; its full sequence is Sulfate/thiosulfate import ATP-binding protein CysA (357 aa).

The ABC transporter domain occupies 3–237; that stretch reads IVIQNVSKSF…PKSPFVYDFL (235 aa). Residue 35–42 coordinates ATP; that stretch reads GPSGSGKT.

Belongs to the ABC transporter superfamily. Sulfate/tungstate importer (TC 3.A.1.6) family. As to quaternary structure, the complex is composed of two ATP-binding proteins (CysA), two transmembrane proteins (CysT and CysW) and a solute-binding protein (CysP).

It is found in the cell membrane. It carries out the reaction sulfate(out) + ATP + H2O = sulfate(in) + ADP + phosphate + H(+). It catalyses the reaction thiosulfate(out) + ATP + H2O = thiosulfate(in) + ADP + phosphate + H(+). Part of the ABC transporter complex CysAWTP involved in sulfate/thiosulfate import. Responsible for energy coupling to the transport system. In Halalkalibacterium halodurans (strain ATCC BAA-125 / DSM 18197 / FERM 7344 / JCM 9153 / C-125) (Bacillus halodurans), this protein is Sulfate/thiosulfate import ATP-binding protein CysA.